The sequence spans 496 residues: MTPPSLSLTASAPSSSASSDVLVLGARSDDEGVIVLSAGARDGLAAELAAVGFSGGKDELVRLPGAEGGPALAVVGMPDERDEDAFRYAAGTAVRQLAGVQRVALALPTETDAQLGATLEGAALGAYAFTEYREKTKAGVKEPVAEIQVVGRSDEGDALIARAATVAEAAGLVKDLVNAPPLDLYPATFAERVEALAADLPVSVEVWDETRLAADGFGGILGVGQGSARPPRLVKVVYSPDSATRHLALVGKGITFDSGGLSLKPASGMVGMKYDMTGAAAVLAAALAAAKLRLPVRVTAWLCLAENMPSGSAIRPNDVLRIRGGRTVEVLNTDAEGRLVLADGLVAAGEERPDAIVDVATLTGAAEVALGTRYAAVMGSDDLVADVIAAAKASGELLWPMPLAGELRATIASDVADIANANPGNTAGGMLLAGVFLQEFIGRSGDAEDSPRIPWAHLDIAGPAKGPSAPYGFTGKGPSAVSVRALIRLAEDFSGR.

Positions 252 and 257 each coordinate Mn(2+). Residue K264 is part of the active site. Positions 275, 334, and 336 each coordinate Mn(2+). R338 is an active-site residue.

This sequence belongs to the peptidase M17 family. It depends on Mn(2+) as a cofactor.

The protein localises to the cytoplasm. It catalyses the reaction Release of an N-terminal amino acid, Xaa-|-Yaa-, in which Xaa is preferably Leu, but may be other amino acids including Pro although not Arg or Lys, and Yaa may be Pro. Amino acid amides and methyl esters are also readily hydrolyzed, but rates on arylamides are exceedingly low.. The enzyme catalyses Release of an N-terminal amino acid, preferentially leucine, but not glutamic or aspartic acids.. In terms of biological role, presumably involved in the processing and regular turnover of intracellular proteins. Catalyzes the removal of unsubstituted N-terminal amino acids from various peptides. The polypeptide is Probable cytosol aminopeptidase (Leifsonia xyli subsp. xyli (strain CTCB07)).